Reading from the N-terminus, the 53-residue chain is uncharacterized protein (53 aa).

The signal sequence occupies residues 1–19; it reads MKLLTILILFYSFFMNLQA.

This is an uncharacterized protein from Autographa californica nuclear polyhedrosis virus (AcMNPV).